Here is a 647-residue protein sequence, read N- to C-terminus: MHTGLEISIPHNLQMSKLLDTINSPSDLKKLTLDELRELAVQIREELVNRVTLNGGHLASSLGVVELTIALHRVFESPKDKIIWDVGHQSYAHKLLTGRREQFATLRQHGGLSGFTCRDESPHDPFGAGHASTSISAGLGMAVARDLAKEDYSVISVIGDGAISGGMSFEAINNAGHLHTKFIVILNDNGMAISPSTGALSKFLNNVRFDPRFEFAKRGAKQTITNMPFGKSVWAFTKSIKRKFEKSMLPGSLWEELGFIYLGPVDGHNIRELEAALKCAKDFESQPVLIHMITKKGKGYDDAEADAVKYHGIAPKSGGLKSGHGLSYSQVFGQTLHKIMSDNPKVVAITAAMTDGCGLSEVAADFPDRVFDVGICEQHAVTFAAGMATQGYIPVVVIYSTFLQRSFDQIIHDVCLQKLPVVFAIDRGGIVGDDGKTHQGIFDLSFMSLIPDMIVTAPSDENDLQHLLYTAVNSGKPFALRYPRGFGEGVETEGTLRNIPIGENEVLASGSEIAIFATGKSVAFAKEAMEILAESGIKPTLVNNRYISPLDTELILKIAGNHKYLITVEENVLSGGLGSRINTILAEAGLVNAVKIANIAVPDKFVEHGNQSLLRAKYGLDGKGIAQKVLSLMANTGEAKHQQILCP.

Residues His88 and Gly129–Ala131 contribute to the thiamine diphosphate site. Mg(2+) is bound at residue Asp160. Thiamine diphosphate-binding positions include Gly161–Ala162, Asn189, Tyr300, and Glu377. Asn189 is a binding site for Mg(2+).

The protein belongs to the transketolase family. DXPS subfamily. Homodimer. Mg(2+) serves as cofactor. Thiamine diphosphate is required as a cofactor.

It carries out the reaction D-glyceraldehyde 3-phosphate + pyruvate + H(+) = 1-deoxy-D-xylulose 5-phosphate + CO2. It functions in the pathway metabolic intermediate biosynthesis; 1-deoxy-D-xylulose 5-phosphate biosynthesis; 1-deoxy-D-xylulose 5-phosphate from D-glyceraldehyde 3-phosphate and pyruvate: step 1/1. In terms of biological role, catalyzes the acyloin condensation reaction between C atoms 2 and 3 of pyruvate and glyceraldehyde 3-phosphate to yield 1-deoxy-D-xylulose-5-phosphate (DXP). In Dehalococcoides mccartyi (strain ATCC BAA-2266 / KCTC 15142 / 195) (Dehalococcoides ethenogenes (strain 195)), this protein is 1-deoxy-D-xylulose-5-phosphate synthase.